The following is a 66-amino-acid chain: Toxin NaTx-4 (66 aa).

Residues 1 to 64 (KEGYLVNKET…TFPIPGKTCS (64 aa)) enclose the LCN-type CS-alpha/beta domain. 4 cysteine pairs are disulfide-bonded: Cys-12-Cys-63, Cys-16-Cys-39, Cys-25-Cys-44, and Cys-29-Cys-46.

The protein belongs to the long (4 C-C) scorpion toxin superfamily. Sodium channel inhibitor family. As to expression, expressed by the venom gland.

The protein resides in the secreted. Functionally, probable sodium channel inhibitor. This Centruroides sculpturatus (Arizona bark scorpion) protein is Toxin NaTx-4.